A 45-amino-acid chain; its full sequence is Psychimicin (45 aa).

3 disulfide bridges follow: Cys-10/Cys-24, Cys-14/Cys-36, and Cys-25/Cys-42.

As to quaternary structure, monomer. Hemolymph.

The protein resides in the secreted. Its function is as follows. Has antimicrobial activity. Is particularly active against fungi, and to a lesser extent against Gram-positive and Gram-negative bacteria. This chain is Psychimicin, found in Oiketicus kirbyi (Bagworm moth).